We begin with the raw amino-acid sequence, 116 residues long: NADH-ubiquinone oxidoreductase chain 3 (116 aa).

The next 3 membrane-spanning stretches (helical) occupy residues 3–23 (LITT…TVSF), 56–76 (FFLI…LLPL), and 87–107 (LTLV…IYEW).

This sequence belongs to the complex I subunit 3 family.

It is found in the mitochondrion membrane. It carries out the reaction a ubiquinone + NADH + 5 H(+)(in) = a ubiquinol + NAD(+) + 4 H(+)(out). Functionally, core subunit of the mitochondrial membrane respiratory chain NADH dehydrogenase (Complex I) that is believed to belong to the minimal assembly required for catalysis. Complex I functions in the transfer of electrons from NADH to the respiratory chain. The immediate electron acceptor for the enzyme is believed to be ubiquinone. In Oncorhynchus kisutch (Coho salmon), this protein is NADH-ubiquinone oxidoreductase chain 3 (MT-ND3).